The chain runs to 344 residues: tRNA dimethylallyltransferase (344 aa).

ATP is bound at residue 19 to 26 (GPTASGKT). 21–26 (TASGKT) contributes to the substrate binding site.

Belongs to the IPP transferase family. As to quaternary structure, monomer. The cofactor is Mg(2+).

It carries out the reaction adenosine(37) in tRNA + dimethylallyl diphosphate = N(6)-dimethylallyladenosine(37) in tRNA + diphosphate. Its function is as follows. Catalyzes the transfer of a dimethylallyl group onto the adenine at position 37 in tRNAs that read codons beginning with uridine, leading to the formation of N6-(dimethylallyl)adenosine (i(6)A). The chain is tRNA dimethylallyltransferase from Bifidobacterium animalis subsp. lactis (strain AD011).